Here is a 158-residue protein sequence, read N- to C-terminus: NAD(P)H-quinone oxidoreductase subunit J, chloroplastic (158 aa).

This sequence belongs to the complex I 30 kDa subunit family. In terms of assembly, NDH is composed of at least 16 different subunits, 5 of which are encoded in the nucleus.

The protein localises to the plastid. It is found in the chloroplast thylakoid membrane. It catalyses the reaction a plastoquinone + NADH + (n+1) H(+)(in) = a plastoquinol + NAD(+) + n H(+)(out). The enzyme catalyses a plastoquinone + NADPH + (n+1) H(+)(in) = a plastoquinol + NADP(+) + n H(+)(out). Its function is as follows. NDH shuttles electrons from NAD(P)H:plastoquinone, via FMN and iron-sulfur (Fe-S) centers, to quinones in the photosynthetic chain and possibly in a chloroplast respiratory chain. The immediate electron acceptor for the enzyme in this species is believed to be plastoquinone. Couples the redox reaction to proton translocation, and thus conserves the redox energy in a proton gradient. The chain is NAD(P)H-quinone oxidoreductase subunit J, chloroplastic from Liriodendron tulipifera (Tuliptree).